The primary structure comprises 147 residues: Large ribosomal subunit protein uL15 (147 aa).

Over residues 1–28 (MIRRRKKVRKLRGSHTHGWGCKKKHRGG) the composition is skewed to basic residues. The segment at 1–43 (MIRRRKKVRKLRGSHTHGWGCKKKHRGGGSKGGRGMAGTGKRN) is disordered. Residues 29 to 38 (GSKGGRGMAG) show a composition bias toward gly residues.

It belongs to the universal ribosomal protein uL15 family. As to quaternary structure, part of the 50S ribosomal subunit.

Functionally, binds to the 23S rRNA. In Pyrococcus furiosus (strain ATCC 43587 / DSM 3638 / JCM 8422 / Vc1), this protein is Large ribosomal subunit protein uL15.